A 431-amino-acid polypeptide reads, in one-letter code: MGKNVVVLGTQWGDEGKGKIVDLLTDKVAAVVRFQGGHNAGHTLVIEGKKTALHLIPSGILRQDVQCLIGNGVVLSPEALLKEVRELEANGVAVRDRLKISLACPIILRTHVRIDQARERARGNDKIGTTGRGIGPAYEDKVSRRGVRLGDLCNPADFEIKLREIMSYHNFVLTEYFKEEAEDIDAALEELRQMGEEILPMAADVTDILHDYRKRGEHILFEGAQGSLLDIDLGTYPYVTSSNTTAGGTATGSGFGPLYLDYVLGITKAYTTRVGSGPFPTELFDDMGKHLAVKGNEVGTTTGRSRRCGWFDAVALRHAIQINSVSGICLTKLDVLDGLETVKVCIGYKTPNGEITRPPIGCDSYSDIEPVYEELPGWSESTVGLTSVDQLPENAKAYIRFLEEQIEAPIDIISTGPDRVETITLRHPFGE.

Residues 13–19 (GDEGKGK) and 41–43 (GHT) each bind GTP. The Proton acceptor role is filled by Asp-14. 2 residues coordinate Mg(2+): Asp-14 and Gly-41. IMP-binding positions include 14–17 (DEGK), 39–42 (NAGH), Thr-130, Arg-144, Gln-225, Thr-240, and Arg-304. His-42 functions as the Proton donor in the catalytic mechanism. Position 300 to 306 (300 to 306 (TTTGRSR)) interacts with substrate. GTP contacts are provided by residues Arg-306, 332-334 (KLD), and 414-416 (STG).

The protein belongs to the adenylosuccinate synthetase family. In terms of assembly, homodimer. Mg(2+) is required as a cofactor.

It localises to the cytoplasm. It catalyses the reaction IMP + L-aspartate + GTP = N(6)-(1,2-dicarboxyethyl)-AMP + GDP + phosphate + 2 H(+). The protein operates within purine metabolism; AMP biosynthesis via de novo pathway; AMP from IMP: step 1/2. Its function is as follows. Plays an important role in the de novo pathway of purine nucleotide biosynthesis. Catalyzes the first committed step in the biosynthesis of AMP from IMP. The sequence is that of Adenylosuccinate synthetase from Marinobacter nauticus (strain ATCC 700491 / DSM 11845 / VT8) (Marinobacter aquaeolei).